Reading from the N-terminus, the 212-residue chain is Leucyl/phenylalanyl-tRNA--protein transferase (212 aa).

It belongs to the L/F-transferase family.

The protein localises to the cytoplasm. The enzyme catalyses N-terminal L-lysyl-[protein] + L-leucyl-tRNA(Leu) = N-terminal L-leucyl-L-lysyl-[protein] + tRNA(Leu) + H(+). It carries out the reaction N-terminal L-arginyl-[protein] + L-leucyl-tRNA(Leu) = N-terminal L-leucyl-L-arginyl-[protein] + tRNA(Leu) + H(+). It catalyses the reaction L-phenylalanyl-tRNA(Phe) + an N-terminal L-alpha-aminoacyl-[protein] = an N-terminal L-phenylalanyl-L-alpha-aminoacyl-[protein] + tRNA(Phe). In terms of biological role, functions in the N-end rule pathway of protein degradation where it conjugates Leu, Phe and, less efficiently, Met from aminoacyl-tRNAs to the N-termini of proteins containing an N-terminal arginine or lysine. The chain is Leucyl/phenylalanyl-tRNA--protein transferase from Allorhizobium ampelinum (strain ATCC BAA-846 / DSM 112012 / S4) (Agrobacterium vitis (strain S4)).